Here is a 335-residue protein sequence, read N- to C-terminus: Dihydroorotate dehydrogenase (quinone) (335 aa).

Residues 59–63 and Thr83 each bind FMN; that span reads AGLDK. Residue Lys63 participates in substrate binding. 108–112 serves as a coordination point for substrate; it reads NRMGF. Positions 136 and 169 each coordinate FMN. Asn169 provides a ligand contact to substrate. Residue Ser172 is the Nucleophile of the active site. Residue Asn174 participates in substrate binding. FMN is bound by residues Lys214 and Thr242. 243 to 244 lines the substrate pocket; sequence NT. Residues Gly265, Gly294, and 315–316 contribute to the FMN site; that span reads YS.

This sequence belongs to the dihydroorotate dehydrogenase family. Type 2 subfamily. Monomer. FMN serves as cofactor.

Its subcellular location is the cell membrane. It carries out the reaction (S)-dihydroorotate + a quinone = orotate + a quinol. Its pathway is pyrimidine metabolism; UMP biosynthesis via de novo pathway; orotate from (S)-dihydroorotate (quinone route): step 1/1. Functionally, catalyzes the conversion of dihydroorotate to orotate with quinone as electron acceptor. The sequence is that of Dihydroorotate dehydrogenase (quinone) from Neisseria meningitidis serogroup B (strain ATCC BAA-335 / MC58).